A 441-amino-acid polypeptide reads, in one-letter code: Cobyrinate a,c-diamide synthase (441 aa).

The region spanning 243 to 434 (TVAVADDAAF…AHVHPESTAF (192 aa)) is the GATase cobBQ-type domain. The active-site Nucleophile is the Cys323.

Belongs to the CobB/CbiA family. Mg(2+) serves as cofactor.

The catalysed reaction is cob(II)yrinate + 2 L-glutamine + 2 ATP + 2 H2O = cob(II)yrinate a,c diamide + 2 L-glutamate + 2 ADP + 2 phosphate + 2 H(+). It participates in cofactor biosynthesis; adenosylcobalamin biosynthesis; cob(II)yrinate a,c-diamide from sirohydrochlorin (anaerobic route): step 10/10. Its function is as follows. Catalyzes the ATP-dependent amidation of the two carboxylate groups at positions a and c of cobyrinate, using either L-glutamine or ammonia as the nitrogen source. This chain is Cobyrinate a,c-diamide synthase, found in Halobacterium salinarum (strain ATCC 700922 / JCM 11081 / NRC-1) (Halobacterium halobium).